The following is a 115-amino-acid chain: Cholecystokinin (115 aa).

The signal sequence occupies residues 1–20; that stretch reads MKSGVCLCVVMAVLAAGALA. The propeptide occupies 21–70; sequence QPVVPAEATDPVEQRAQEAPRRQLRAVLRTDGEPRARLGALLARYIQQVR. Position 97 is a sulfotyrosine (tyrosine 97). Position 103 is a phenylalanine amide (phenylalanine 103). A propeptide spanning residues 107-115 is cleaved from the precursor; sequence SAEDYEYPS. Sulfotyrosine occurs at positions 111 and 113.

It belongs to the gastrin/cholecystokinin family. As to quaternary structure, binds to CCK-A receptors in the pancreas and CCK-B receptors in the brain. The precursor is cleaved by proteases to produce a number of active cholecystokinins. Expressed and secreted by discrete enteroendocrine cells that reside as single cells scattered among enterocytes in the mucosa of the small intestine. Released into the blood following ingestion of a meal.

The protein resides in the secreted. This peptide hormone induces gall bladder contraction and the release of pancreatic enzymes in the gut. Its function in the brain is not clear. Binding to CCK-A receptors stimulates amylase release from the pancreas, binding to CCK-B receptors stimulates gastric acid secretion. The sequence is that of Cholecystokinin (Cck) from Mus musculus (Mouse).